Reading from the N-terminus, the 622-residue chain is MRLLRRRHMAVRLVMVGSAFVLFLFILQRDVSGREQATEKPWLRSLVSQKDHVLDLMLGAVHNLRDSMPKFQIRAPEPQQTLASTNQSCLPGFYTPAELKPFWERPPQDPNGPGADGKAFQKKEWTPQETQEKEEGYKKHCFNAFASDRISLQRALGPDTRPPECVDQKFRRCPPLPATSVIIVFHNEAWSTLLRTVYSVLHTTPAILLKEIILVDDASTDEYLKEPLERYVKQLQVVQVVRQQERKGLITARLLGASVAQAEVLTFLDAHCECFHGWLEPLLARIAEDETVVVSPNIVTIDLNTFEFSKPVQRGRVQSRGNFDWSLTFGWEVLPAREKQRRKDETYPIKSPTFAGGLFSISKSYFEHIGTYDNQMEIWGGENVEMSFRVWQCGGQLEIIPCSVVGHVFRTKSPHTFPKGINVIARNQVRLAEVWMDGYKEIFYRRNLQAAQMAREKSFGDISERLQLRERLNCHNFSWFLDNVYPEMFVPDLKPTFFGALKNLGVDHCLDVGENNNGGKPLILYTCHGLGGNQYFEYTTQRDLRHNIAKQLCLHASAGTLGLRSCHFTGKNSQVPKDEEWEFTQDQLIRNSGSGTCLTSKDKKPVMATCNPSDPHQHWLFI.

Residues 1–8 lie on the Cytoplasmic side of the membrane; sequence MRLLRRRH. A helical; Signal-anchor for type II membrane protein transmembrane segment spans residues 9 to 28; that stretch reads MAVRLVMVGSAFVLFLFILQ. The Lumenal portion of the chain corresponds to 29–622; that stretch reads RDVSGREQAT…SDPHQHWLFI (594 aa). N-linked (GlcNAc...) asparagine glycosylation occurs at Asn-86. Residues 103–135 are disordered; sequence WERPPQDPNGPGADGKAFQKKEWTPQETQEKEE. Residues 119 to 135 are compositionally biased toward basic and acidic residues; sequence AFQKKEWTPQETQEKEE. Residues 176–285 form a catalytic subdomain A region; that stretch reads LPATSVIIVF…HGWLEPLLAR (110 aa). Asp-269, His-271, and His-407 together coordinate Mn(2+). The tract at residues 348-410 is catalytic subdomain B; sequence PIKSPTFAGG…PCSVVGHVFR (63 aa). N-linked (GlcNAc...) asparagine glycosylation occurs at Asn-476. The 116-residue stretch at 507–622 folds into the Ricin B-type lectin domain; the sequence is DHCLDVGENN…SDPHQHWLFI (116 aa). Cys-509 and Cys-527 are joined by a disulfide. Asp-511, Glu-514, His-528, and Asn-533 together coordinate UDP-N-acetyl-alpha-D-galactosamine. 2 disulfide bridges follow: Cys-553–Cys-566 and Cys-597–Cys-610.

It belongs to the glycosyltransferase 2 family. GalNAc-T subfamily. Mn(2+) serves as cofactor.

It localises to the golgi apparatus membrane. The catalysed reaction is L-seryl-[protein] + UDP-N-acetyl-alpha-D-galactosamine = a 3-O-[N-acetyl-alpha-D-galactosaminyl]-L-seryl-[protein] + UDP + H(+). It carries out the reaction L-threonyl-[protein] + UDP-N-acetyl-alpha-D-galactosamine = a 3-O-[N-acetyl-alpha-D-galactosaminyl]-L-threonyl-[protein] + UDP + H(+). It participates in protein modification; protein glycosylation. Catalyzes the initial reaction in O-linked oligosaccharide biosynthesis, the transfer of an N-acetyl-D-galactosamine residue to a serine or threonine residue on the protein receptor. May participate in synthesis of oncofetal fibronectin. Has activity toward MUC1A, MUC2, EA2 and fibronectin peptides. This Bos taurus (Bovine) protein is Polypeptide N-acetylgalactosaminyltransferase 6 (GALNT6).